The following is a 652-amino-acid chain: Beta-glucuronidase (652 aa).

The signal sequence occupies residues 1 to 22 (MVRGPAGAWAVLGPLLWGCGLA). Residues asparagine 173 and asparagine 420 are each glycosylated (N-linked (GlcNAc...) asparagine). Residue glutamate 451 is the Proton donor of the active site. Residue asparagine 631 is glycosylated (N-linked (GlcNAc...) asparagine).

This sequence belongs to the glycosyl hydrolase 2 family. As to quaternary structure, homotetramer.

It is found in the lysosome. The catalysed reaction is a beta-D-glucuronoside + H2O = D-glucuronate + an alcohol. Inhibited by L-aspartic acid. Plays an important role in the degradation of dermatan and keratan sulfates. In Sus scrofa (Pig), this protein is Beta-glucuronidase (GUSB).